Consider the following 392-residue polypeptide: Phosphoglycerate kinase (392 aa).

Substrate-binding positions include 21-23 (DLN), R36, 59-62 (HLGR), R113, and R146. ATP contacts are provided by residues K197, E319, and 345 to 348 (GGDT).

Belongs to the phosphoglycerate kinase family. As to quaternary structure, monomer.

The protein resides in the cytoplasm. It catalyses the reaction (2R)-3-phosphoglycerate + ATP = (2R)-3-phospho-glyceroyl phosphate + ADP. The protein operates within carbohydrate degradation; glycolysis; pyruvate from D-glyceraldehyde 3-phosphate: step 2/5. This Thioalkalivibrio sulfidiphilus (strain HL-EbGR7) protein is Phosphoglycerate kinase.